A 484-amino-acid polypeptide reads, in one-letter code: MKSSVEQLSPTRVRIKVEVPFAELEPDFQRAYKELAKQVRLPGFRPGRAPVKLLEARFGREAMLDQIVNDAVPSRYGQALAESEIQPLGRPDIEVTQKEYGQDLAFTAEVDVRPEIALPDLTGLSVSVDAIEATDDEVNAELESLRARFGTLTGVERPVATGDFISIDLSAAVDGEDVPNAAAEGLSHEVRSGRLIAGLDDAVVGLSVDESRVFTAKLAAGDHAGRDAEVTVTVKSVKERELPEPDDEFAQLASEFDTIDELRASLREQVLQAKRVGQAEQIRNATIDALLERVDVPTPESYVQAQYEGVLHSALSGINNDEARFNELLVEQGSSRDAFDAEARTASEKDVKRQLLLDALADDLKVQVGQEDLTERLVLTSRQYGIEPQQLFVYLQENNQLPSMFADVRRELAVKAVAQAATVTDTDGNTIDTSEFFGKPPENDVTDLLDDDADGDAGVDADGDTENSAEPADADSADTAQGAG.

Residues 162 to 243 (GDFISIDLSA…VKSVKERELP (82 aa)) form the PPIase FKBP-type domain. Residues 427–484 (DGNTIDTSEFFGKPPENDVTDLLDDDADGDAGVDADGDTENSAEPADADSADTAQGAG) are disordered. Over residues 444-476 (DVTDLLDDDADGDAGVDADGDTENSAEPADADS) the composition is skewed to acidic residues.

Belongs to the FKBP-type PPIase family. Tig subfamily.

Its subcellular location is the cytoplasm. The catalysed reaction is [protein]-peptidylproline (omega=180) = [protein]-peptidylproline (omega=0). Its function is as follows. Involved in protein export. Acts as a chaperone by maintaining the newly synthesized protein in an open conformation. Functions as a peptidyl-prolyl cis-trans isomerase. This Mycobacterium ulcerans (strain Agy99) protein is Trigger factor.